The chain runs to 79 residues: Defensin-1 (79 aa).

Residues 1–23 form the signal peptide; that stretch reads MKFLNVVAIALLVVACLAVYSNA. Cystine bridges form between cysteine 42/cysteine 69, cysteine 55/cysteine 75, and cysteine 59/cysteine 77.

It belongs to the invertebrate defensin family. Type 1 subfamily.

It is found in the secreted. This chain is Defensin-1 (SMD1), found in Stomoxys calcitrans (Stable fly).